Reading from the N-terminus, the 256-residue chain is Small ribosomal subunit protein eS1 (256 aa).

Ala-2 is subject to N-acetylalanine; partial.

The protein belongs to the eukaryotic ribosomal protein eS1 family. As to quaternary structure, component of the small ribosomal subunit. Mature ribosomes consist of a small (40S) and a large (60S) subunit. The 40S subunit contains about 33 different proteins and 1 molecule of RNA (18S). The 60S subunit contains about 49 different proteins and 3 molecules of RNA (25S, 5.8S and 5S).

The protein resides in the cytoplasm. The sequence is that of Small ribosomal subunit protein eS1 from Lachancea thermotolerans (strain ATCC 56472 / CBS 6340 / NRRL Y-8284) (Yeast).